A 948-amino-acid chain; its full sequence is Putative JmjC domain-containing histone demethylation protein 1 (948 aa).

The JmjC domain occupies 243-402 (VSTTKLAYYV…PQLSIYNLEL (160 aa)). Threonine 294 contacts substrate. Fe cation contacts are provided by histidine 297 and glutamate 299. Lysine 314 serves as a coordination point for substrate.

The protein belongs to the JHDM1 histone demethylase family. Fe(2+) serves as cofactor.

The protein resides in the nucleus. The catalysed reaction is N(6),N(6)-dimethyl-L-lysyl(36)-[histone H3] + 2 2-oxoglutarate + 2 O2 = L-lysyl(36)-[histone H3] + 2 formaldehyde + 2 succinate + 2 CO2. May be a histone demethylase that specifically demethylates 'Lys-36' of histone H3, thereby playing a central role in histone code. Represses transcriptional silencing by negatively affecting heterochromatin stability. The protein is Putative JmjC domain-containing histone demethylation protein 1 (jhd1) of Schizosaccharomyces pombe (strain 972 / ATCC 24843) (Fission yeast).